The chain runs to 288 residues: Urease accessory protein UreD 1 (288 aa).

The segment covering 1–10 has biased composition (pro residues); it reads MHGPLAPAPS. The tract at residues 1-35 is disordered; that stretch reads MHGPLAPAPSPERLGAAPARQRSDGRIRLRVGPAR.

This sequence belongs to the UreD family. UreD, UreF and UreG form a complex that acts as a GTP-hydrolysis-dependent molecular chaperone, activating the urease apoprotein by helping to assemble the nickel containing metallocenter of UreC. The UreE protein probably delivers the nickel.

The protein resides in the cytoplasm. Required for maturation of urease via the functional incorporation of the urease nickel metallocenter. The polypeptide is Urease accessory protein UreD 1 (Methylobacterium radiotolerans (strain ATCC 27329 / DSM 1819 / JCM 2831 / NBRC 15690 / NCIMB 10815 / 0-1)).